Reading from the N-terminus, the 408-residue chain is Acetate kinase (408 aa).

Asn10 serves as a coordination point for Mg(2+). An ATP-binding site is contributed by Lys17. Arg96 lines the substrate pocket. Catalysis depends on Asp153, which acts as the Proton donor/acceptor. ATP is bound by residues 213–217 (HLGNG) and 288–290 (DLR). Glu393 contributes to the Mg(2+) binding site.

It belongs to the acetokinase family. Homodimer. Mg(2+) is required as a cofactor. The cofactor is Mn(2+).

Its subcellular location is the cytoplasm. The catalysed reaction is acetate + ATP = acetyl phosphate + ADP. Its pathway is metabolic intermediate biosynthesis; acetyl-CoA biosynthesis; acetyl-CoA from acetate: step 1/2. Catalyzes the formation of acetyl phosphate from acetate and ATP. Can also catalyze the reverse reaction. The chain is Acetate kinase from Borrelia recurrentis (strain A1).